Reading from the N-terminus, the 440-residue chain is ATP-dependent protease ATPase subunit HslU (440 aa).

Residues isoleucine 18 and 60-65 (GVGKTE) contribute to the ATP site. The disordered stretch occupies residues 138–159 (RAQSFDQEDPSAGTRQKLRKKL). Residues aspartate 252, glutamate 318, and arginine 390 each contribute to the ATP site.

It belongs to the ClpX chaperone family. HslU subfamily. As to quaternary structure, a double ring-shaped homohexamer of HslV is capped on each side by a ring-shaped HslU homohexamer. The assembly of the HslU/HslV complex is dependent on binding of ATP.

Its subcellular location is the cytoplasm. Functionally, ATPase subunit of a proteasome-like degradation complex; this subunit has chaperone activity. The binding of ATP and its subsequent hydrolysis by HslU are essential for unfolding of protein substrates subsequently hydrolyzed by HslV. HslU recognizes the N-terminal part of its protein substrates and unfolds these before they are guided to HslV for hydrolysis. The polypeptide is ATP-dependent protease ATPase subunit HslU (Alkalilimnicola ehrlichii (strain ATCC BAA-1101 / DSM 17681 / MLHE-1)).